Here is a 140-residue protein sequence, read N- to C-terminus: Lipoprotein MlpD (140 aa).

A signal peptide spans 1–17 (MKIINILFCLFLLMLNG). Cysteine 18 carries N-palmitoyl cysteine lipidation. The S-diacylglycerol cysteine moiety is linked to residue cysteine 18. Residues 22-53 (DTNNSQTKSRQKRDLTQKEATQEKPKSKEELL) are disordered. Positions 33–53 (KRDLTQKEATQEKPKSKEELL) are enriched in basic and acidic residues.

It belongs to the Multicopy lipoprotein (Mlp) family.

It is found in the cell outer membrane. Functionally, an outer membrane protein that may participate in pathogenesis. Some human Lyme disease patients have antibodies against this protein. The Mlp proteins probably undergo intragenic recombination, generating new alleles. The chain is Lipoprotein MlpD from Borreliella burgdorferi (strain ATCC 35210 / DSM 4680 / CIP 102532 / B31) (Borrelia burgdorferi).